We begin with the raw amino-acid sequence, 173 residues long: Crossover junction endodeoxyribonuclease RuvC (173 aa).

Catalysis depends on residues Asp8, Glu68, and Asp140. Mg(2+) is bound by residues Asp8, Glu68, and Asp140.

Belongs to the RuvC family. Homodimer which binds Holliday junction (HJ) DNA. The HJ becomes 2-fold symmetrical on binding to RuvC with unstacked arms; it has a different conformation from HJ DNA in complex with RuvA. In the full resolvosome a probable DNA-RuvA(4)-RuvB(12)-RuvC(2) complex forms which resolves the HJ. It depends on Mg(2+) as a cofactor.

The protein resides in the cytoplasm. It catalyses the reaction Endonucleolytic cleavage at a junction such as a reciprocal single-stranded crossover between two homologous DNA duplexes (Holliday junction).. In terms of biological role, the RuvA-RuvB-RuvC complex processes Holliday junction (HJ) DNA during genetic recombination and DNA repair. Endonuclease that resolves HJ intermediates. Cleaves cruciform DNA by making single-stranded nicks across the HJ at symmetrical positions within the homologous arms, yielding a 5'-phosphate and a 3'-hydroxyl group; requires a central core of homology in the junction. The consensus cleavage sequence is 5'-(A/T)TT(C/G)-3'. Cleavage occurs on the 3'-side of the TT dinucleotide at the point of strand exchange. HJ branch migration catalyzed by RuvA-RuvB allows RuvC to scan DNA until it finds its consensus sequence, where it cleaves and resolves the cruciform DNA. The polypeptide is Crossover junction endodeoxyribonuclease RuvC (Saccharophagus degradans (strain 2-40 / ATCC 43961 / DSM 17024)).